Reading from the N-terminus, the 4001-residue chain is Ankyrin repeat and KH domain-containing protein mask (4001 aa).

A compositionally biased stretch (basic and acidic residues) spans 1 to 14 (MNNDAKNHESDDLN). Disordered stretches follow at residues 1-61 (MNND…NRQL), 91-174 (KNEP…GGGS), and 391-494 (DTDT…FLLD). The span at 15 to 30 (VRSTAYFNQQTTTNQP) shows a compositional bias: polar residues. Low complexity predominate over residues 38–61 (NNTGSGSGSNNNNNNTNQNPNRQL). Residues 94 to 117 (PLTTTESSGVLTNTPLPSNSRLKV) show a composition bias toward polar residues. The span at 118 to 159 (NNNNNTNNTAKMSGTSSSQSSATPTPPTASSSTTTTTTTNIS) shows a compositional bias: low complexity. A compositionally biased stretch (gly residues) spans 160 to 174 (TGGGGSGSSGGGGGS). Composition is skewed to acidic residues over residues 408 to 425 (SESE…ESDP) and 434 to 486 (VRED…EDAP). S501 bears the Phosphoserine mark. ANK repeat units follow at residues 546-575 (SGFS…NVNL), 584-614 (DGES…QVED), 618-647 (KDST…DVNA), 651-680 (TGNT…NVEE), 684-713 (NGHT…GINT), 718-747 (FKES…DQEH), 751-780 (EMHT…QVNM), 784-813 (SFES…NIEE), 817-846 (EGYT…NINA), 851-880 (TQET…NLEL), 881-910 (GAST…NVHA), 914-943 (TGDT…ELEH), 947-976 (GGRT…NVNK), 981-1011 (NDHT…PFHK), and 1014-1043 (DNST…ISPT). 2 disordered regions span residues 1046-1067 (AASA…NQMR) and 1306-1376 (QPGE…PTAL). The span at 1367–1376 (DNNQPVPTAL) shows a compositional bias: polar residues. A phosphoserine mark is found at S1389 and S1588. Disordered regions lie at residues 1583–1612 (GDQP…RLGS), 1646–1669 (SDLE…ENTL), 1682–1779 (EDGI…SLPL), 1852–1872 (VVHQ…DGSA), 2084–2108 (MAQH…QQLH), and 2225–2256 (TPAP…KERR). Acidic residues-rich tracts occupy residues 1646–1657 (SDLESECEDDAE), 1685–1704 (IIVE…EEQD), and 1716–1759 (DDED…EPDS). Positions 1760–1776 (DQGTGNNNNNSKSGASS) are enriched in low complexity. Low complexity predominate over residues 2084 to 2093 (MAQHQAQQQQ). Polar residues predominate over residues 2228-2237 (PSSGVSSTKS). ANK repeat units lie at residues 2312–2341 (NHDT…NIEH), 2345–2374 (KGFT…ELEA), 2379–2408 (TKDT…NKEH), 2412–2441 (SDYT…EINS), 2447–2476 (LGIS…DINA), 2481–2510 (NRNT…NVEH), 2514–2543 (TGLT…DVNA), 2549–2578 (SRDT…SVEV), 2582–2611 (KGNS…DIDS), and 2615–2644 (RRVS…QFPS). A coiled-coil region spans residues 2674–2732 (AKEAQAVKANKNASILLEELDLERTREESRKAAAARRRERKKKKKMEKKEEKRRQQQGN). S2687 is modified (phosphoserine). The residue at position 2698 (T2698) is a Phosphothreonine. A disordered region spans residues 2699–3033 (REESRKAAAA…TSTTTAASSV (335 aa)). The span at 2706–2719 (AAARRRERKKKKKM) shows a compositional bias: basic residues. The span at 2739–2762 (MQGDDDDASDKDDDSDKDDEDEEA) shows a compositional bias: acidic residues. S2747 and S2753 each carry phosphoserine. A compositionally biased stretch (low complexity) spans 2793–2810 (SQSAQAAEAAANSVSTNS). Over residues 2828–2839 (EPTQPVITSNSV) the composition is skewed to polar residues. A compositionally biased stretch (basic and acidic residues) spans 2868-2886 (RQLDVKKEEPALKKKEEKN). The segment covering 2906–2941 (ALPAKQQPSSSSKLQSSESASNINSSTATNTSSANT) has biased composition (low complexity). Positions 2950–2960 (ASQTASATTLN) are enriched in polar residues. Basic and acidic residues predominate over residues 2963 to 2975 (KRTEVDGWKEVVR). Polar residues predominate over residues 2995 to 3004 (TATSSATSVQ). The span at 3012–3032 (ANSSSNSSSSLTTSTTTAASS) shows a compositional bias: low complexity. Residues 3036-3100 (MTCKKVQVPV…DATKQAHMLI (65 aa)) enclose the KH domain. Low complexity-rich tracts occupy residues 3156–3178 (ASTT…ASYS), 3195–3227 (SGRS…AGSS), and 3244–3257 (NGVI…SSKS). Disordered stretches follow at residues 3156-3329 (ASTT…GQGG), 3383-3457 (KPIA…QTSQ), 3520-3636 (AVGD…PPTA), and 3744-3786 (IFPQ…GGAA). Polar residues predominate over residues 3262 to 3278 (QKSSTTLGKSSTVSPGA). Over residues 3396–3416 (GSPTQVQQQHQTQQQQQQQLP) the composition is skewed to low complexity. Residues 3417-3427 (QPAPVPGPQPQ) show a composition bias toward pro residues. Residues 3428–3457 (QQPLQQQQQQQAPQQQPQQPNQQQQPQTSQ) are compositionally biased toward low complexity. Residues 3539-3559 (NILSSPVGSSKASSNHSTSPP) show a composition bias toward polar residues. Over residues 3565-3577 (QQQQQQQPQSSQQ) the composition is skewed to low complexity. Residue S3596 is modified to Phosphoserine. The segment covering 3774–3786 (PPGTGARQPGGAA) has biased composition (low complexity). Phosphoserine occurs at positions 3820, 3822, and 3825. Residues 3876–3945 (KAQPPGLQQP…HNMQAPPNMS (70 aa)) form a disordered region. Residues 3891 to 3910 (SQQQQQQPLNWLKQQPQQQQ) are compositionally biased toward low complexity.

In terms of assembly, may interact with Unc-89 (via protein kinase domain 1 or 2). Expressed ubiquitously in eye imaginal disk, slightly higher expression is seen in presumptive photoreceptors. Expressed in indirect flight muscle (IFM) (at protein level).

It is found in the cytoplasm. Its subcellular location is the myofibril. The protein localises to the sarcomere. It localises to the z line. The protein resides in the m line. Mediator of receptor tyrosine kinase (RTK) signaling, and may act either downstream of MAPK or transduce signaling through a parallel branch of the RTK pathway. Required for the development and organization of indirect flight muscle sarcomeres by regulating the formation of M line and H zone and the correct assembly of thick and thin filaments in the sarcomere. The protein is Ankyrin repeat and KH domain-containing protein mask of Drosophila melanogaster (Fruit fly).